Consider the following 195-residue polypeptide: Molybdenum cofactor guanylyltransferase (195 aa).

GTP is bound by residues 12–14 (LAG), Lys25, Asn53, Asp70, and Asp100. Asp100 is a Mg(2+) binding site.

It belongs to the MobA family. As to quaternary structure, monomer. It depends on Mg(2+) as a cofactor.

The protein localises to the cytoplasm. The catalysed reaction is Mo-molybdopterin + GTP + H(+) = Mo-molybdopterin guanine dinucleotide + diphosphate. In terms of biological role, transfers a GMP moiety from GTP to Mo-molybdopterin (Mo-MPT) cofactor (Moco or molybdenum cofactor) to form Mo-molybdopterin guanine dinucleotide (Mo-MGD) cofactor. This Vibrio parahaemolyticus serotype O3:K6 (strain RIMD 2210633) protein is Molybdenum cofactor guanylyltransferase.